A 575-amino-acid polypeptide reads, in one-letter code: Proline--tRNA ligase (575 aa).

Belongs to the class-II aminoacyl-tRNA synthetase family. ProS type 1 subfamily. Homodimer.

The protein resides in the cytoplasm. It carries out the reaction tRNA(Pro) + L-proline + ATP = L-prolyl-tRNA(Pro) + AMP + diphosphate. Functionally, catalyzes the attachment of proline to tRNA(Pro) in a two-step reaction: proline is first activated by ATP to form Pro-AMP and then transferred to the acceptor end of tRNA(Pro). As ProRS can inadvertently accommodate and process non-cognate amino acids such as alanine and cysteine, to avoid such errors it has two additional distinct editing activities against alanine. One activity is designated as 'pretransfer' editing and involves the tRNA(Pro)-independent hydrolysis of activated Ala-AMP. The other activity is designated 'posttransfer' editing and involves deacylation of mischarged Ala-tRNA(Pro). The misacylated Cys-tRNA(Pro) is not edited by ProRS. The sequence is that of Proline--tRNA ligase from Pseudothermotoga lettingae (strain ATCC BAA-301 / DSM 14385 / NBRC 107922 / TMO) (Thermotoga lettingae).